Here is a 270-residue protein sequence, read N- to C-terminus: Glucosamine-6-phosphate deaminase (270 aa).

Asp68 acts as the Proton acceptor; for enolization step in catalysis. Residue Asp145 is the For ring-opening step of the active site. His147 acts as the Proton acceptor; for ring-opening step in catalysis. Glu152 acts as the For ring-opening step in catalysis.

It belongs to the glucosamine/galactosamine-6-phosphate isomerase family. NagB subfamily.

The catalysed reaction is alpha-D-glucosamine 6-phosphate + H2O = beta-D-fructose 6-phosphate + NH4(+). The protein operates within amino-sugar metabolism; N-acetylneuraminate degradation; D-fructose 6-phosphate from N-acetylneuraminate: step 5/5. Its function is as follows. Catalyzes the reversible isomerization-deamination of glucosamine 6-phosphate (GlcN6P) to form fructose 6-phosphate (Fru6P) and ammonium ion. The sequence is that of Glucosamine-6-phosphate deaminase from Bifidobacterium longum subsp. infantis (strain ATCC 15697 / DSM 20088 / JCM 1222 / NCTC 11817 / S12).